Consider the following 627-residue polypeptide: Glycerophosphodiester phosphodiesterase domain-containing protein 4 (627 aa).

Residues 1–17 lie on the Cytoplasmic side of the membrane; it reads MLLFLWIETSNEYFNFD. A helical transmembrane segment spans residues 18 to 38; sequence WVIFLGTGYWFYWSIFILSLA. Position 39 (Gly39) is a topological domain, extracellular. Residues 40–60 traverse the membrane as a helical segment; the sequence is ILTAYSSLLLLLGLLLLWEGI. Over 61–69 the chain is Cytoplasmic; the sequence is ELYLHLCHK. The helical transmembrane segment at 70–90 threads the bilayer; sequence ILILLVILPCVILMFIICKFW. Topologically, residues 91-107 are extracellular; that stretch reads KERWLVAGLSLQIFAPY. Residues 108–128 traverse the membrane as a helical segment; that stretch reads VHLVSITVMVILFWPVAIYVA. Topologically, residues 129–162 are cytoplasmic; it reads RLEREVRMRRYRMTHSEKKRLKKCNVIARLRGLQ. A helical membrane pass occupies residues 163 to 183; it reads VAVGLPFLLIFLSLCLMPLGI. The Extracellular segment spans residues 184 to 468; sequence YSPCIQEKEN…PHFFMTPKFY (285 aa). Positions 198–457 constitute a GP-PDE domain; the sequence is PTLFGHRGAP…DNIGLLSQLN (260 aa). 3 residues coordinate a divalent metal cation: Glu230, Asp232, and His245. N-linked (GlcNAc...) asparagine glycans are attached at residues Asn308 and Asn397. The helical transmembrane segment at 469–489 threads the bilayer; sequence MFIWLLVDIISVLFIVAIFCF. Over 490-627 the chain is Cytoplasmic; the sequence is HWRRETIKEK…TMPSVEVPYP (138 aa).

Belongs to the glycerophosphoryl diester phosphodiesterase family.

The protein resides in the membrane. This is Glycerophosphodiester phosphodiesterase domain-containing protein 4 (GDPD4) from Macaca fascicularis (Crab-eating macaque).